The sequence spans 548 residues: Chaperonin GroEL (548 aa).

ATP is bound by residues 30–33 (TLGP), lysine 51, 87–91 (DGTTT), glycine 415, and aspartate 495.

This sequence belongs to the chaperonin (HSP60) family. Forms a cylinder of 14 subunits composed of two heptameric rings stacked back-to-back. Interacts with the co-chaperonin GroES.

It localises to the cytoplasm. It carries out the reaction ATP + H2O + a folded polypeptide = ADP + phosphate + an unfolded polypeptide.. In terms of biological role, together with its co-chaperonin GroES, plays an essential role in assisting protein folding. The GroEL-GroES system forms a nano-cage that allows encapsulation of the non-native substrate proteins and provides a physical environment optimized to promote and accelerate protein folding. In Pseudoalteromonas atlantica (strain T6c / ATCC BAA-1087), this protein is Chaperonin GroEL.